We begin with the raw amino-acid sequence, 333 residues long: Ketol-acid reductoisomerase (NADP(+)) (333 aa).

A KARI N-terminal Rossmann domain is found at 1–181; sequence MKVYYDQDAD…GGARSGVIET (181 aa). Residues 24-27, Arg-47, and 82-85 each bind NADP(+); these read YGSQ and DEVQ. Residue His-107 is part of the active site. NADP(+) is bound at residue Gly-133. Residues 182–327 form the KARI C-terminal knotted domain; the sequence is TFREETETDL…KELRSMMPWL (146 aa). Positions 190, 194, 226, and 230 each coordinate Mg(2+). Residue Ser-251 coordinates substrate.

It belongs to the ketol-acid reductoisomerase family. The cofactor is Mg(2+).

It carries out the reaction (2R)-2,3-dihydroxy-3-methylbutanoate + NADP(+) = (2S)-2-acetolactate + NADPH + H(+). The catalysed reaction is (2R,3R)-2,3-dihydroxy-3-methylpentanoate + NADP(+) = (S)-2-ethyl-2-hydroxy-3-oxobutanoate + NADPH + H(+). It functions in the pathway amino-acid biosynthesis; L-isoleucine biosynthesis; L-isoleucine from 2-oxobutanoate: step 2/4. The protein operates within amino-acid biosynthesis; L-valine biosynthesis; L-valine from pyruvate: step 2/4. In terms of biological role, involved in the biosynthesis of branched-chain amino acids (BCAA). Catalyzes an alkyl-migration followed by a ketol-acid reduction of (S)-2-acetolactate (S2AL) to yield (R)-2,3-dihydroxy-isovalerate. In the isomerase reaction, S2AL is rearranged via a Mg-dependent methyl migration to produce 3-hydroxy-3-methyl-2-ketobutyrate (HMKB). In the reductase reaction, this 2-ketoacid undergoes a metal-dependent reduction by NADPH to yield (R)-2,3-dihydroxy-isovalerate. This Desulfovibrio desulfuricans (strain ATCC 27774 / DSM 6949 / MB) protein is Ketol-acid reductoisomerase (NADP(+)).